We begin with the raw amino-acid sequence, 237 residues long: RNA chaperone ProQ (237 aa).

The disordered stretch occupies residues 106–188 (AKARVQAQRA…QPRPVPVTDI (83 aa)). Residues 146-158 (PRREAGAAPENRK) are compositionally biased toward basic and acidic residues.

Belongs to the ProQ family.

The protein resides in the cytoplasm. In terms of biological role, RNA chaperone with significant RNA binding, RNA strand exchange and RNA duplexing activities. May regulate ProP activity through an RNA-based, post-transcriptional mechanism. This is RNA chaperone ProQ from Yersinia pseudotuberculosis serotype O:1b (strain IP 31758).